Consider the following 698-residue polypeptide: MVNFGKKLMADQIPEWKGYYINYKLMKKKVKQYGQQVQQGEKDRRRVLKDFSKMLDDQIEKIVLFLLEQQGALASRIEKLGKQRAILAEQPDISAIAELREAYREVGLDLIKLLKFVDLNATGIRKILKKFDKRFGYRFTDYYVTSRSNHPYSQLQQVFKHVGVGAVVGALSRNLADLQERQGSYLSIYDQPSTALKDPIIDMINSSVDKLTRSTNFLRFLGQHALIVGEESPSTAEEEEIEDQKYHFMSLMLNLVNTFLYMVNTYIIVPTADDYSVSLGAASTVCGVVIGSMAVAQIFSSVYFSAWSNKSYFRPLIFSSIVLFLGNVCYAMAYDMKSLTVLIIGRLLCGMGSARAVNRRYISDCVPARIRMQASAGFVSASALGMACGPALAGLLQWKFKIYMVTFNQSTLPGWVMAVAWLLYLVWLWISFKEPNRATEVNGTQQNPASVQRADIEQLENGLAQPLLRDSSKKDEDDDEEVDDSEEGTHDSRKPATSIGSAYRLLTPSVKVQLLIYFMLKYAMEILLSESSVITNHYFNWNTSAVAIFLAILGLTVLPVNAVVGTYISNMFEDRQLLMVSQITLLVGIIFSFKITSTYSVVQYVVSALVTFVSAEVLEGVNLSLLSSVMSSRLSRGTYNGGLLSTEAGTLARVVADCTITAAGYLGIGKLLNVTLLPSLVICAASIASTFLTYNSLF.

Residues 2-145 form the SPX domain; that stretch reads VNFGKKLMAD…GYRFTDYYVT (144 aa). A run of 6 helical transmembrane segments spans residues 248–268, 279–299, 316–336, 339–357, 376–396, and 412–432; these read FMSL…TYII, LGAA…AQIF, LIFS…AYDM, LTVL…ARAV, AGFV…AGLL, and LPGW…WISF. Positions 467-495 are disordered; the sequence is LLRDSSKKDEDDDEEVDDSEEGTHDSRKP. Positions 476–486 are enriched in acidic residues; the sequence is EDDDEEVDDSE. 5 helical membrane-spanning segments follow: residues 514 to 534, 545 to 565, 577 to 597, 605 to 625, and 671 to 691; these read LLIY…SSVI, AVAI…AVVG, LLMV…KITS, VVSA…NLSL, and LLNV…ASTF.

This sequence belongs to the major facilitator superfamily.

The protein localises to the membrane. This Oryza sativa subsp. indica (Rice) protein is SPX domain-containing membrane protein OsI_21475.